Consider the following 306-residue polypeptide: Manganese transport system membrane protein MntB (306 aa).

Topologically, residues 1–25 (MNQLVVAFPFWHWLVEPLQYEFLIR) are periplasmic. Residues 26 to 46 (AIWVSAFVGLVCAVLSCYITL) form a helical membrane-spanning segment. Residues 47 to 48 (KG) are Cytoplasmic-facing. Residues 49-69 (WSLMGDAISHAVVPGVVLAYA) traverse the membrane as a helical segment. Topologically, residues 70-71 (LN) are periplasmic. The helical transmembrane segment at 72–92 (IPFAIGAFTFGFGATVAIGYV) threads the bilayer. The Cytoplasmic portion of the chain corresponds to 93–101 (KSKTRLKED). The chain crosses the membrane as a helical span at residues 102 to 122 (AVIGIVFTGFFALGLVLVTKI). Residues 123 to 141 (PSNVDLFHILFGNVLGISQ) lie on the Periplasmic side of the membrane. The helical transmembrane segment at 142 to 162 (QDIIQTLIAGSITLIVILLRR) threads the bilayer. At 163 to 179 (KDLLLFCFDPNHAKAIG) the chain is on the cytoplasmic side. A helical membrane pass occupies residues 180–200 (LRTQVMYYTLLSVLALTIVAA). Over 201–202 (LQ) the chain is Periplasmic. A helical transmembrane segment spans residues 203–223 (TAGIILVISMLVTPGSIGYLL). Residues 224–228 (SDRFD) lie on the Cytoplasmic side of the membrane. The chain crosses the membrane as a helical span at residues 229-249 (HMLWYSVVSSVLSCVLGTYLS). Topologically, residues 250–255 (YHFDVS) are periplasmic. The chain crosses the membrane as a helical span at residues 256 to 276 (TGGMIVVILTTLFVIAMIGAP). Residues 277–306 (KYGILAQEWRKRSGPNPEDDENQTVVVDQV) are Cytoplasmic-facing.

The protein belongs to the ABC-3 integral membrane protein family.

It is found in the cell membrane. Functionally, part of an ATP-driven transport system for manganese. This is Manganese transport system membrane protein MntB (mntB) from Synechocystis sp. (strain ATCC 27184 / PCC 6803 / Kazusa).